Consider the following 614-residue polypeptide: Numb-like protein (614 aa).

Disordered regions lie at residues 1–68 (MSRS…QWQA), 223–283 (GSFR…PVAA), 371–420 (FASA…LEEV), 448–468 (QQQQ…LQPF), and 539–614 (LGKA…EIEL). One can recognise a PID domain in the interval 74-223 (RKGTCSFPVR…ASRTSFAREG (150 aa)). Ser224 and Ser228 each carry phosphoserine. The span at 233–245 (PAEREAGDKKKAE) shows a compositional bias: basic and acidic residues. Positions 246–260 (AAAAPAVAPGPAQPG) are enriched in low complexity. At Ser263 the chain carries Phosphoserine. Position 279 is a phosphothreonine (Thr279). The span at 371–390 (FASAGAPVPGPPSATTGTSA) shows a compositional bias: low complexity. Residues 409–418 (TPSEAERWLE) are compositionally biased toward basic and acidic residues. Ser411 is subject to Phosphoserine. Residues 563–578 (NGAPWPPEPAPAPAPE) show a composition bias toward pro residues.

As to quaternary structure, associates with EPS15 and NOTCH1. Interacts (via PTB domain) with MAP3K7IP2 (via C-terminal). Interacts (via C-terminal) with TRAF6 (via TRAF domains).

The protein resides in the cytoplasm. Plays a role in the process of neurogenesis. Required throughout embryonic neurogenesis to maintain neural progenitor cells, also called radial glial cells (RGCs), by allowing their daughter cells to choose progenitor over neuronal cell fate. Not required for the proliferation of neural progenitor cells before the onset of embryonic neurogenesis. Also required postnatally in the subventricular zone (SVZ) neurogenesis by regulating SVZ neuroblasts survival and ependymal wall integrity. Negative regulator of NF-kappa-B signaling pathway. The inhibition of NF-kappa-B activation is mediated at least in part, by preventing MAP3K7IP2 to interact with polyubiquitin chains of TRAF6 and RIPK1 and by stimulating the 'Lys-48'-linked polyubiquitination and degradation of TRAF6 in cortical neurons. This chain is Numb-like protein (Numbl), found in Rattus norvegicus (Rat).